The following is a 258-amino-acid chain: Alpha-fibrinogenase-like (258 aa).

Positions 1 to 18 (MVLIRVLANLLVLQLSYA) are cleaved as a signal peptide. The propeptide occupies 19-24 (QKSSEL). The region spanning 25–249 (VVGGHPCNIY…YTDWIHSIIA (225 aa)) is the Peptidase S1 domain. 6 disulfides stabilise this stretch: Cys-31/Cys-163, Cys-50/Cys-66, Cys-98/Cys-256, Cys-142/Cys-210, Cys-174/Cys-189, and Cys-200/Cys-225. An N-linked (GlcNAc...) asparagine glycan is attached at Asn-44. Catalysis depends on charge relay system residues His-65 and Asp-110. Ser-204 acts as the Charge relay system in catalysis.

The protein belongs to the peptidase S1 family. Snake venom subfamily. In terms of assembly, monomer. Expressed by the venom gland.

It localises to the secreted. In terms of biological role, degrades alpha chain of fibrinogen (FGA), and has strong caseinolytic activity. Cleaves oxidized insulin B-chain at '40-Tyr-|-Leu-41', '48-Phe-|-Phe-49' and '49-Phe-|-Tyr-50', and glucagon at the bonds '62-Tyr-|-Ser-63', 66-Leu-|-Asp-67' and '78-Leu-|-Met-79' bonds. This is Alpha-fibrinogenase-like from Daboia siamensis (Eastern Russel's viper).